The chain runs to 340 residues: Mitochondrial calcium uniporter regulator 1 (340 aa).

The segment at 1–44 (MDSGSVAAERPRRTPSRQRLPSSGCGVPARPGVSTLPGGRSWLR) is disordered. Topologically, residues 1 to 54 (MDSGSVAAERPRRTPSRQRLPSSGCGVPARPGVSTLPGGRSWLRPRGRAARASP) are mitochondrial intermembrane. Residues 55–74 (LLFLLLVPSPRLAATATATA) traverse the membrane as a helical segment. Residues 75–316 (PRRTLAERSR…KTMLEAHKLD (242 aa)) are Mitochondrial matrix-facing. A coiled-coil region spans residues 197–291 (ALQQVLSKIA…VSLHAQQDRA (95 aa)). K204 carries the N6-acetyllysine modification. The chain crosses the membrane as a helical span at residues 317–339 (TIKYLAGSVFTCLTVALGFYRLW). Residue I340 is a topological domain, mitochondrial intermembrane.

Belongs to the CCDC90 family. As to quaternary structure, interacts (via coiled coil regions) with MCU; the interaction is direct. Interacts with SMDT1/EMRE; the interaction is direct. Interacts with PPIF.

The protein resides in the mitochondrion inner membrane. Its function is as follows. Key regulator of mitochondrial calcium uniporter (MCU) required for calcium entry into mitochondrion. Plays a direct role in uniporter-mediated calcium uptake via a direct interaction with MCU. Probably involved in the assembly of the membrane components of the uniporter complex (uniplex). The chain is Mitochondrial calcium uniporter regulator 1 from Mus musculus (Mouse).